The following is a 262-amino-acid chain: Shikimate dehydrogenase (NADP(+)) (262 aa).

Residues Ser15 to Ser17 and Thr62 each bind shikimate. The Proton acceptor role is filled by Lys66. Glu78 contacts NADP(+). Positions 87 and 102 each coordinate shikimate. Residues Gly126–Ala130, Asn150–Arg155, and Met214 contribute to the NADP(+) site. Tyr216 is a binding site for shikimate. An NADP(+)-binding site is contributed by Gly236.

It belongs to the shikimate dehydrogenase family. As to quaternary structure, homodimer.

It carries out the reaction shikimate + NADP(+) = 3-dehydroshikimate + NADPH + H(+). It functions in the pathway metabolic intermediate biosynthesis; chorismate biosynthesis; chorismate from D-erythrose 4-phosphate and phosphoenolpyruvate: step 4/7. In terms of biological role, involved in the biosynthesis of the chorismate, which leads to the biosynthesis of aromatic amino acids. Catalyzes the reversible NADPH linked reduction of 3-dehydroshikimate (DHSA) to yield shikimate (SA). This is Shikimate dehydrogenase (NADP(+)) from Acinetobacter baumannii (strain AB307-0294).